The chain runs to 292 residues: Protein sarah (292 aa).

The segment covering 1-51 (MSDAAKSNNNASADAPDPTTPDATGEADAANAATPTTPRGNHNNNNSANGR) has biased composition (low complexity). Residues 1–111 (MSDAAKSNNN…TEPEVDADSF (111 aa)) form a disordered region. Serine 67, serine 72, and serine 100 each carry phosphoserine. Residues 98–111 (VDSDTEPEVDADSF) show a composition bias toward acidic residues. Phosphothreonine occurs at positions 102 and 196. Phosphoserine occurs at positions 215 and 219. At threonine 246 the chain carries Phosphothreonine.

This sequence belongs to the RCAN family. As to quaternary structure, interacts with Pp2B-14D, CanA-14F and CanB2. In terms of processing, phosphorylation at Ser-215 and Ser-219 is essential for calcineurin activation and completion of female meiosis. Sgg is required for phosphorylation of Ser-215 in activated eggs. Ser-100, Thr-102 and Ser-219 are highly phosphorylated in both ovaries and activated eggs; however, phosphorylation at Ser-100 or Thr-102 is not required for sra function in completion of female meiosis. As to expression, expressed in central nervous system of the third instar larvae, with a relatively intense signal in the brain and weak signals in the ventral ganglion. Relatively low, but ubiquitous expression level is observed in leg and wing imaginal disks, no signal is detected in the eye-antennal disks. Expressed in all neurons in the adult brain.

Its function is as follows. Required for elongation of meiosis I spindle. Critical for ovulation, meiotic progression in oocytes and female courtship behavior, including their postmating changes. Regulates female meiosis by controlling calcineurin activity in the germline. Has a role in calcium signaling during egg activation; bcd mRNA polyadenylation and translation in the oocyte. This chain is Protein sarah (sra), found in Drosophila melanogaster (Fruit fly).